A 306-amino-acid chain; its full sequence is Ribosomal protein L11 methyltransferase (306 aa).

S-adenosyl-L-methionine is bound by residues threonine 154, glycine 179, aspartate 201, and asparagine 242.

Belongs to the methyltransferase superfamily. PrmA family.

The protein resides in the cytoplasm. The catalysed reaction is L-lysyl-[protein] + 3 S-adenosyl-L-methionine = N(6),N(6),N(6)-trimethyl-L-lysyl-[protein] + 3 S-adenosyl-L-homocysteine + 3 H(+). In terms of biological role, methylates ribosomal protein L11. This is Ribosomal protein L11 methyltransferase from Stenotrophomonas maltophilia (strain R551-3).